The following is a 278-amino-acid chain: MKRIHLHLLSDSTGETLEMIAKAALAQFENADVVRHFWPMVRSRQHLERIVPELSNNPGLVLFTLVNAETRRALRDHCRRLSLPAVDALDEVTAALEVQLGQEAHGRPGRQHKMDEAYFKRVEAIQFTIAHDDGVGWENWEEADIVLAGVSRSSKTPTSIYLANRGYKVANIPLVMESPPPPALYELKNPMVVGLTTAPERLVQIRRNRLLTLNEQAETSYVEKDRVTEEVKFARRLFSDNNWPVIDVTRRSIEETAAAVIRLHNERHARVKPGEKPI.

149-156 (GVSRSSKT) lines the ADP pocket.

The protein belongs to the pyruvate, phosphate/water dikinase regulatory protein family. PDRP subfamily.

It catalyses the reaction N(tele)-phospho-L-histidyl/L-threonyl-[pyruvate, phosphate dikinase] + ADP = N(tele)-phospho-L-histidyl/O-phospho-L-threonyl-[pyruvate, phosphate dikinase] + AMP + H(+). It carries out the reaction N(tele)-phospho-L-histidyl/O-phospho-L-threonyl-[pyruvate, phosphate dikinase] + phosphate + H(+) = N(tele)-phospho-L-histidyl/L-threonyl-[pyruvate, phosphate dikinase] + diphosphate. Functionally, bifunctional serine/threonine kinase and phosphorylase involved in the regulation of the pyruvate, phosphate dikinase (PPDK) by catalyzing its phosphorylation/dephosphorylation. In Erythrobacter litoralis (strain HTCC2594), this protein is Putative pyruvate, phosphate dikinase regulatory protein.